A 432-amino-acid chain; its full sequence is Guanine/hypoxanthine permease PbuO (432 aa).

Helical transmembrane passes span 15–35 (IIAG…NPVI), 51–71 (IIAS…PIAI), 92–112 (GITY…FIIL), 133–153 (ITTG…GIVA), 174–194 (LVGL…ALFI), 196–216 (MAAT…KGFM), 234–254 (FGDV…LVTI), 340–360 (ALSG…SLMM), 379–399 (LVIL…LGFI), and 412–432 (REIH…LFIL).

This sequence belongs to the nucleobase:cation symporter-2 (NCS2) (TC 2.A.40) family. Azg-like subfamily.

Its subcellular location is the cell membrane. Functionally, involved in the uptake of the purine bases hypoxanthine and guanine. May work at purine concentrations higher than 100 uM. This is Guanine/hypoxanthine permease PbuO (pbuO) from Bacillus subtilis (strain 168).